Reading from the N-terminus, the 68-residue chain is Tau-scoloptoxin(04)-Ssm1b (68 aa).

The N-terminal stretch at 1–25 (MLKSFCILSVFMVLFLAKFPDLCSG) is a signal peptide. Positions 26 to 36 (EEISPLKIVVR) are excised as a propeptide. 2 cysteine pairs are disulfide-bonded: Cys45–Cys56 and Cys50–Cys63. A highly charged C-terminal region, binds to TRPV1 channel region spans residues 55 to 67 (RCSIVDKQCIKKE).

This sequence belongs to the scoloptoxin-04 family. As to expression, expressed by the venom gland.

It is found in the secreted. Extremely potent agonist and potentiator of TRPV1 (EC(50)=470-521.5 nM (mouse)). It strongly promotes the heat activation process by downshifting the activation threshold temperature. It preferably binds to the activated channel and promotes its opening. Holding the channel closed by cooling prevents binding of this toxin, leaving it ineffective. The toxin binds to the charge-rich outer pore region of the channel where it directly interacts with the pore helix and turret, two adjacent structural elements known to be critical for activation gating of TRPV1. In comparison with Sm1b, induces a TRPV1 desensitization with slower kinetics (20 seconds). In vivo, induces pain in mice after intraplantar injection. In terms of biological role, potent agonist and probable potentiator of TRPV1 (EC(50)=38.35 uM (mouse)). Also binds to the outer pore region of TRPV1. In comparison with Sm1a, induces a TRPV1 desensitization with faster kinetics (2 seconds) and leads to a more complete TRPV1 desensitization. Desensitization is achieved by reducing both the open probability and the single-channel conductance upon prolonged exposure. This chain is Tau-scoloptoxin(04)-Ssm1b, found in Scolopendra mutilans (Chinese red-headed centipede).